A 987-amino-acid polypeptide reads, in one-letter code: Mediator of RNA polymerase II transcription subunit 24 (987 aa).

Short sequence motifs (LXXLL motif) lie at residues 128 to 132, 344 to 348, 446 to 450, 555 to 559, 786 to 790, and 855 to 859; these read LHWLL, LTPLL, LDLLL, LVALL, LPGLL, and LMRLL. 2 positions are modified to phosphoserine: S860 and S871.

This sequence belongs to the Mediator complex subunit 24 family. Component of the Mediator complex, which is composed of MED1, MED4, MED6, MED7, MED8, MED9, MED10, MED11, MED12, MED13, MED13L, MED14, MED15, MED16, MED17, MED18, MED19, MED20, MED21, MED22, MED23, MED24, MED25, MED26, MED27, MED29, MED30, MED31, CCNC, CDK8 and CDC2L6/CDK11. The MED12, MED13, CCNC and CDK8 subunits form a distinct module termed the CDK8 module. Mediator containing the CDK8 module is less active than Mediator lacking this module in supporting transcriptional activation. Individual preparations of the Mediator complex lacking one or more distinct subunits have been variously termed ARC, CRSP, DRIP, PC2, SMCC and TRAP. Interacts with AR.

The protein resides in the nucleus. Its function is as follows. Component of the Mediator complex, a coactivator involved in the regulated transcription of nearly all RNA polymerase II-dependent genes. Mediator functions as a bridge to convey information from gene-specific regulatory proteins to the basal RNA polymerase II transcription machinery. Mediator is recruited to promoters by direct interactions with regulatory proteins and serves as a scaffold for the assembly of a functional preinitiation complex with RNA polymerase II and the general transcription factors. The protein is Mediator of RNA polymerase II transcription subunit 24 (Med24) of Rattus norvegicus (Rat).